Consider the following 846-residue polypeptide: Patched domain-containing protein 4 (846 aa).

10 helical membrane passes run 41–61 (HPVFFLTVPAVLTITFGLSAL), 230–250 (SILARSKVLVSLVLILTTATL), 265–285 (GLLGVLTVCISIITAAGIFFI), 293–313 (TLLGIPFFAMGHGTKGVFELL), 336–356 (VMVTYTMTSSLYFITFGMGAS), 373–393 (VSILLNYFYIFSFFGSCLVFA), 465–485 (PFVVILYLIYASFSFMGCLQI), 660–680 (PVLIAGFGVLLVLILTFFLVI), 686–706 (FWLILSVTSIELGVLGLMTLW), and 718–738 (LIYTLNFAIDHCAPLLFTFVL). One can recognise an SSD domain in the interval 233 to 392 (ARSKVLVSLV…FSFFGSCLVF (160 aa)). N-linked (GlcNAc...) asparagine glycosylation is present at N762. A run of 2 helical transmembrane segments spans residues 765-785 (SFLIGLVPLLFVPSNLTFTLF) and 787-807 (CLLLTGGCTLLHCFVILPVFL).

The protein belongs to the patched family.

Its subcellular location is the membrane. Its function is as follows. Could act as a repressor of canonical hedgehog signaling by antagonizing the effects of SMO, as suggested by down-regulation of hedgehog target genes, including GLI1, PTCH1, and PTCH2 in PTCHD4-expressing cells. This Homo sapiens (Human) protein is Patched domain-containing protein 4 (PTCHD4).